The following is a 283-amino-acid chain: Glutamyl-Q tRNA(Asp) synthetase (283 aa).

L-glutamate-binding positions include R5 to T9 and E41. A 'HIGH' region motif is present at residues P8–S18. 4 residues coordinate Zn(2+): C97, C99, Y111, and C115. Positions 168 and 186 each coordinate L-glutamate. Positions K224–Q228 match the 'KMSKS' region motif. K227 provides a ligand contact to ATP.

This sequence belongs to the class-I aminoacyl-tRNA synthetase family. GluQ subfamily. Requires Zn(2+) as cofactor.

Functionally, catalyzes the tRNA-independent activation of glutamate in presence of ATP and the subsequent transfer of glutamate onto a tRNA(Asp). Glutamate is transferred on the 2-amino-5-(4,5-dihydroxy-2-cyclopenten-1-yl) moiety of the queuosine in the wobble position of the QUC anticodon. The chain is Glutamyl-Q tRNA(Asp) synthetase from Idiomarina loihiensis (strain ATCC BAA-735 / DSM 15497 / L2-TR).